A 521-amino-acid chain; its full sequence is Chromaffin granule amine transporter (521 aa).

Residues 1-21 (MLQVVLGAPQRLLKEGRQSRK) lie on the Cytoplasmic side of the membrane. The helical transmembrane segment at 22-42 (LVLVVVFVALLLDNMLLTVVV) threads the bilayer. The Lumenal, vesicle portion of the chain corresponds to 43 to 135 (PIVPTFLYAT…IEFLEEENVR (93 aa)). N58, N87, and N104 each carry an N-linked (GlcNAc...) asparagine glycan. A helical transmembrane segment spans residues 136-155 (IGILFASKALMQLLVNPFVG). Residues 156–164 (PLTNRIGYH) lie on the Cytoplasmic side of the membrane. Residues 165–185 (IPMFVGFMIMFLSTLMFAFSG) traverse the membrane as a helical segment. Over 186–194 (TYALLFVAR) the chain is Lumenal, vesicle. A helical membrane pass occupies residues 195 to 215 (TLQGIGSSFSSVAGLGMLASV). Residues 216 to 224 (YTDNYERGR) lie on the Cytoplasmic side of the membrane. The helical transmembrane segment at 225 to 247 (AMGIALGGLALGLLVGAPFGSVM) threads the bilayer. Residues 248-253 (YEFVGK) lie on the Lumenal, vesicle side of the membrane. The helical transmembrane segment at 254 to 276 (SSPFLILAFLALLDGALQLCILW) threads the bilayer. Over 277-296 (PSKVSPESAMGTSLLTLLKD) the chain is Cytoplasmic. Residues 297–316 (PYILVAAGSICLANMGVAIL) traverse the membrane as a helical segment. The Lumenal, vesicle segment spans residues 317-332 (EPTLPIWMMQTMCSPE). The chain crosses the membrane as a helical span at residues 333-357 (WQLGLAFLPASVAYLIGTNLFGVLA). Over 358-362 (NKMGR) the chain is Cytoplasmic. Residues 363 to 383 (WLCSLVGMVAVGISLLCVPLA) traverse the membrane as a helical segment. Over 384 to 394 (HNIFGLIGPNA) the chain is Lumenal, vesicle. A helical membrane pass occupies residues 395 to 415 (GLGFAIGMVDSSLMPIMGYLV). Topologically, residues 416-419 (DLRH) are cytoplasmic. The helical transmembrane segment at 420–440 (TSVYGSVYAIADVAFCVGFAI) threads the bilayer. Residues 441-445 (GPSTG) lie on the Lumenal, vesicle side of the membrane. The chain crosses the membrane as a helical span at residues 446–467 (GVIVQVIGFPWLMVIIGTINII). Topologically, residues 468-521 (YAPLCCFLQNPPAKEEKRAILSQECPTETQMYTFQKPTKAFPLGENSDDPSSGE) are cytoplasmic.

It belongs to the major facilitator superfamily. Vesicular transporter family. In terms of tissue distribution, adrenal gland.

The protein resides in the cytoplasmic vesicle. It is found in the secretory vesicle membrane. The protein localises to the secretory vesicle. Its subcellular location is the synaptic vesicle membrane. It carries out the reaction serotonin(in) + 2 H(+)(out) = serotonin(out) + 2 H(+)(in). The enzyme catalyses (R)-noradrenaline(in) + 2 H(+)(out) = (R)-noradrenaline(out) + 2 H(+)(in). It catalyses the reaction dopamine(in) + 2 H(+)(out) = dopamine(out) + 2 H(+)(in). Strongly inhibited by reserpine, ketanserin and methamphetamine. Also inhibited weakly by tetrabenazine. Functionally, electrogenic antiporter that exchanges one cationic monoamine with two intravesicular protons across the membrane of secretory and synaptic vesicles. Uses the electrochemical proton gradient established by the V-type proton-pump ATPase to accumulate high concentrations of monoamines inside the vesicles prior to their release via exocytosis. Transports catecholamines and indolamines with higher affinity for serotonin. Regulates the transvesicular monoaminergic gradient that determines the quantal size. Mediates presynaptic monoaminergic vesicle transport in the amygdala and prefrontal brain regions related with emotion processing in response to environmental stimuli. The sequence is that of Chromaffin granule amine transporter (Slc18a1) from Rattus norvegicus (Rat).